A 367-amino-acid polypeptide reads, in one-letter code: Small ribosomal subunit protein uS2 (367 aa).

Residues 1 to 68 (MPKKAEAKTG…NSTPSTGSKF (68 aa)) form a disordered region. The span at 21 to 40 (AKKDVKAEVNETNKTAEKVS) shows a compositional bias: basic and acidic residues. Residues 53–66 (TNESSSNSTPSTGS) are compositionally biased toward low complexity.

The protein belongs to the universal ribosomal protein uS2 family.

This chain is Small ribosomal subunit protein uS2, found in Malacoplasma penetrans (strain HF-2) (Mycoplasma penetrans).